We begin with the raw amino-acid sequence, 276 residues long: Large ribosomal subunit protein uL2 (276 aa).

Residues Thr-219–Lys-276 form a disordered region. Basic residues predominate over residues Lys-258 to Lys-276.

Belongs to the universal ribosomal protein uL2 family. As to quaternary structure, part of the 50S ribosomal subunit. Forms a bridge to the 30S subunit in the 70S ribosome.

One of the primary rRNA binding proteins. Required for association of the 30S and 50S subunits to form the 70S ribosome, for tRNA binding and peptide bond formation. It has been suggested to have peptidyltransferase activity; this is somewhat controversial. Makes several contacts with the 16S rRNA in the 70S ribosome. This chain is Large ribosomal subunit protein uL2, found in Clostridioides difficile (strain 630) (Peptoclostridium difficile).